Consider the following 524-residue polypeptide: Probable pectinesterase/pectinesterase inhibitor 42 (524 aa).

Residues 1–22 form the signal peptide; it reads MLVKVFSFFILMITMVVIGVSK. The pectinesterase inhibitor 42 stretch occupies residues 23–172; it reads EYCDDKHSCQ…ISKAKVALAL (150 aa). A pectinesterase 42 region spans residues 215–510; that stretch reads DVVVAKDGTG…FTVAKLLDGE (296 aa). Residues Asn-265 and Asn-281 are each glycosylated (N-linked (GlcNAc...) asparagine). Residue Thr-290 participates in substrate binding. Residue Asp-343 is the Proton donor; for pectinesterase activity of the active site. A disulfide bridge links Cys-357 with Cys-377. The active-site Nucleophile; for pectinesterase activity is the Asp-364. N-linked (GlcNAc...) asparagine glycosylation occurs at Asn-412. Substrate contacts are provided by Arg-430 and Trp-432.

This sequence in the N-terminal section; belongs to the PMEI family. The protein in the C-terminal section; belongs to the pectinesterase family. Expressed in siliques but not in flower buds.

It is found in the secreted. Its subcellular location is the cell wall. It carries out the reaction [(1-&gt;4)-alpha-D-galacturonosyl methyl ester](n) + n H2O = [(1-&gt;4)-alpha-D-galacturonosyl](n) + n methanol + n H(+). The protein operates within glycan metabolism; pectin degradation; 2-dehydro-3-deoxy-D-gluconate from pectin: step 1/5. In terms of biological role, acts in the modification of cell walls via demethylesterification of cell wall pectin. The chain is Probable pectinesterase/pectinesterase inhibitor 42 (PME42) from Arabidopsis thaliana (Mouse-ear cress).